Consider the following 290-residue polypeptide: 7-methylguanosine phosphate-specific 5'-nucleotidase A (290 aa).

Aspartate 39 acts as the Nucleophile in catalysis. Residues aspartate 39 and aspartate 41 each coordinate Mg(2+). The active-site Proton donor is the aspartate 41. Glutamate 86 is a binding site for CMP. A N(7)-methyl-GMP-binding site is contributed by glutamate 86. Residues serine 154–alanine 155 and lysine 203 contribute to the substrate site. Aspartate 228 provides a ligand contact to Mg(2+).

The protein belongs to the pyrimidine 5'-nucleotidase family. As to quaternary structure, monomer.

The protein resides in the cytoplasm. The enzyme catalyses N(7)-methyl-GMP + H2O = N(7)-methylguanosine + phosphate. The catalysed reaction is CMP + H2O = cytidine + phosphate. It carries out the reaction a ribonucleoside 5'-phosphate + H2O = a ribonucleoside + phosphate. Its function is as follows. Specifically hydrolyzes 7-methylguanosine monophosphate (m(7)GMP) to 7-methylguanosine and inorganic phosphate. The specific activity for m(7)GMP may protect cells against undesired salvage of m(7)GMP and its incorporation into nucleic acids. Also has weak activity for CMP. UMP and purine nucleotides are poor substrates. The polypeptide is 7-methylguanosine phosphate-specific 5'-nucleotidase A (Nt5c3b-a) (Xenopus laevis (African clawed frog)).